A 472-amino-acid chain; its full sequence is Putative ankyrin repeat protein L675 (472 aa).

8 ANK repeats span residues 125-156, 187-216, 265-295, 297-323, 325-351, 352-381, 382-411, and 413-440; these read YKAN…DIHL, DNFK…NETI, YKTK…DKDI, HAML…NIHY, NDQA…GMDS, NNVF…DVNA, NNRS…DIKI, and DTVI…SCDD.

This Acanthamoeba polyphaga (Amoeba) protein is Putative ankyrin repeat protein L675.